Consider the following 209-residue polypeptide: Neurotrophin-4 (209 aa).

The signal sequence occupies residues 1 to 21 (MLPRHSCSLLLFLLLLPSVPM). Positions 22–79 (EPQPPSSTLPPFLAPEWDLLSPRVALSRGTPAGPPLLFLLEAGAYGEPAGAPANRSRR) are excised as a propeptide. Asparagine 75 carries an N-linked (GlcNAc...) asparagine glycan. 3 disulfide bridges follow: cysteine 96/cysteine 169, cysteine 140/cysteine 198, and cysteine 157/cysteine 200.

It belongs to the NGF-beta family. Expressed in thymus, muscle, ovary, brain, heart, stomach and kidney. Expressed in both embryo and adult tissues.

The protein resides in the secreted. Functionally, target-derived survival factor for peripheral sensory sympathetic neurons. May promote ameloblast differentiation and subsequent reduction in proliferation of ameloblasts. This is Neurotrophin-4 (Ntf4) from Rattus norvegicus (Rat).